The chain runs to 217 residues: MSPPPAVVTESADGQPEQPPVTAIAEELEKKLQTDEPIVEDVKDDEDDDDDDEEEEDDDAQGVSGSSKQSRSEKKSRKAMLKLGMKPVTGVSRVTIKRTKNVLFFISKPDVFKSPHSETYVIFGEAKIEDLSSQLQTQAAQQFRMPEIGATSQRAEASTATVEAQVEEDEEEIDETGVEARDIDLVMTQAGVSRSKAVKALKSHDGDIVSAIMELTT.

The tract at residues Met-1–Leu-81 is disordered. Residues Pro-37–Ala-60 show a composition bias toward acidic residues. One can recognise an NAC-A/B domain in the interval Ser-70–Leu-135. In terms of domain architecture, UBA spans Val-178–Leu-215.

This sequence belongs to the NAC-alpha family.

Its function is as follows. May promote appropriate targeting of ribosome-nascent polypeptide complexes. This is Nascent polypeptide-associated complex subunit alpha-like protein 2 from Arabidopsis thaliana (Mouse-ear cress).